The sequence spans 657 residues: Regulator of MON1-CCZ1 complex (657 aa).

The Mic1 domain occupies 471–637; sequence KKEMPHKFVI…NFTPGEHCEE (167 aa).

It belongs to the RMC1 family. In terms of assembly, found in a complex with RMC1, CCZ1 MON1A and MON1B.

It localises to the lysosome membrane. Its subcellular location is the late endosome membrane. Its function is as follows. Component of the CCZ1-MON1 RAB7A guanine exchange factor (GEF). Acts as a positive regulator of CCZ1-MON1A/B function necessary for endosomal/autophagic flux and efficient RAB7A localization. The polypeptide is Regulator of MON1-CCZ1 complex (Homo sapiens (Human)).